The chain runs to 59 residues: Chromatin protein Cren7 (59 aa).

It belongs to the Cren7 family. As to quaternary structure, monomer. In terms of processing, methylated at multiple sites, to varying extents.

Its subcellular location is the chromosome. The protein localises to the cytoplasm. In terms of biological role, a chromatin protein, binds double-stranded DNA without sequence specificity. Constrains negative DNA supercoils. The protein is Chromatin protein Cren7 of Pyrobaculum aerophilum (strain ATCC 51768 / DSM 7523 / JCM 9630 / CIP 104966 / NBRC 100827 / IM2).